The sequence spans 816 residues: Leucine--tRNA ligase (816 aa).

The 'HIGH' region signature appears at 40–51; sequence SYPSGSQLHAGH. The 'KMSKS' region signature appears at 576 to 580; sequence KMSKS. Lys-579 contacts ATP.

It belongs to the class-I aminoacyl-tRNA synthetase family.

It is found in the cytoplasm. It catalyses the reaction tRNA(Leu) + L-leucine + ATP = L-leucyl-tRNA(Leu) + AMP + diphosphate. In Clostridium perfringens (strain SM101 / Type A), this protein is Leucine--tRNA ligase.